The chain runs to 516 residues: MEISYGRALWRNFLGQSPDWYKLALIIFLIVNPLVFAVAPFVAGWLLVVEFIFTLAMALKCYPLLPGGLLAIEALLIGMTSPAHVREEIAGNLEVLLLLIFMVAGIYFMKQLLLFVFTRLLLGIRSKMLLSLAFCLAAAFLSAFLDALTVVAVVISVAVGFYGIYHRVASARPDDNDLLDDSHIEQHYREVLEQFRGFLRSLMMHAGVGTALGGVMTMVGEPQNLIIAKAAGWHFGEFFIRMAPVTVPVMVCGLLTCLLVEKYRLFGYGEPLPPTVRKVLQDFDDRSRAQRSRQEQLRLLAQAVIGVWLIVALAFHLAEVGLIGLSVIILATTFSGVTDEHAIGKAFTEALPFTALLTVFFAIVAVIIDQQLFTPVIEFVLQASPHAQLSLFYLFNGLLSSISDNVFVGTVYINEAKTALEHGVISLPQFEMLAVAINTGTNLPSVATPNGQAAFLFLLTSALAPLIRLSYGRMVWMALPYTLVLTLVGLLCVEFTLMPVTNWLLAHGWVTTPTLP.

A run of 12 helical transmembrane segments spans residues 23–43 (LALIIFLIVNPLVFAVAPFVA), 61–80 (CYPLLPGGLLAIEALLIGMT), 97–117 (LLLIFMVAGIYFMKQLLLFVF), 120–140 (LLLGIRSKMLLSLAFCLAAAF), 144–164 (FLDALTVVAVVISVAVGFYGI), 202–222 (LMMHAGVGTALGGVMTMVGEP), 238–258 (FFIRMAPVTVPVMVCGLLTCL), 303–323 (AVIGVWLIVALAFHLAEVGLI), 348–368 (TEALPFTALLTVFFAIVAVII), 391–411 (LFYLFNGLLSSISDNVFVGTV), 447–467 (ATPNGQAAFLFLLTSALAPLI), and 475–495 (VWMALPYTLVLTLVGLLCVEF).

The protein belongs to the NhaB Na(+)/H(+) (TC 2.A.34) antiporter family.

It localises to the cell inner membrane. It carries out the reaction 2 Na(+)(in) + 3 H(+)(out) = 2 Na(+)(out) + 3 H(+)(in). Its function is as follows. Na(+)/H(+) antiporter that extrudes sodium in exchange for external protons. The sequence is that of Na(+)/H(+) antiporter NhaB from Klebsiella pneumoniae (strain 342).